A 574-amino-acid polypeptide reads, in one-letter code: Aspartate--tRNA ligase (574 aa).

Glutamate 172 lines the L-aspartate pocket. Positions 196 to 199 are aspartate; sequence QIFK. Arginine 218 serves as a coordination point for L-aspartate. Residues 218-220 and glutamine 227 contribute to the ATP site; that span reads RDE. Histidine 453 is an L-aspartate binding site. Glutamate 487 contributes to the ATP binding site. Arginine 494 lines the L-aspartate pocket. 539–542 contributes to the ATP binding site; it reads GLDR.

The protein belongs to the class-II aminoacyl-tRNA synthetase family. Type 1 subfamily. Homodimer.

It localises to the cytoplasm. It catalyses the reaction tRNA(Asp) + L-aspartate + ATP = L-aspartyl-tRNA(Asp) + AMP + diphosphate. Catalyzes the attachment of L-aspartate to tRNA(Asp) in a two-step reaction: L-aspartate is first activated by ATP to form Asp-AMP and then transferred to the acceptor end of tRNA(Asp). This is Aspartate--tRNA ligase from Blochmanniella pennsylvanica (strain BPEN).